The primary structure comprises 188 residues: Peptidyl-tRNA hydrolase (188 aa).

Position 15 (Y15) interacts with tRNA. H20 acts as the Proton acceptor in catalysis. Residues F63, N65, and N111 each coordinate tRNA.

The protein belongs to the PTH family. As to quaternary structure, monomer.

It is found in the cytoplasm. The catalysed reaction is an N-acyl-L-alpha-aminoacyl-tRNA + H2O = an N-acyl-L-amino acid + a tRNA + H(+). Functionally, hydrolyzes ribosome-free peptidyl-tRNAs (with 1 or more amino acids incorporated), which drop off the ribosome during protein synthesis, or as a result of ribosome stalling. Catalyzes the release of premature peptidyl moieties from peptidyl-tRNA molecules trapped in stalled 50S ribosomal subunits, and thus maintains levels of free tRNAs and 50S ribosomes. This is Peptidyl-tRNA hydrolase from Hydrogenobaculum sp. (strain Y04AAS1).